The chain runs to 296 residues: Probable lipid kinase YegS-like (296 aa).

The 130-residue stretch at 1–130 folds into the DAGKc domain; sequence MPHTLLILNG…IDLAQVNDKH (130 aa). Residues Thr-37, 63-69, and Thr-92 each bind ATP; that span reads GDGTINE. Residues Leu-212, Asp-215, and Leu-217 each contribute to the Mg(2+) site. Glu-268 serves as the catalytic Proton acceptor.

The protein belongs to the diacylglycerol/lipid kinase family. YegS lipid kinase subfamily. The cofactor is Mg(2+). It depends on Ca(2+) as a cofactor.

Its subcellular location is the cytoplasm. Its function is as follows. Probably phosphorylates lipids; the in vivo substrate is unknown. This Yersinia enterocolitica serotype O:8 / biotype 1B (strain NCTC 13174 / 8081) protein is Probable lipid kinase YegS-like.